The sequence spans 500 residues: Oogenesin-3 (500 aa).

The LRR 1; degenerate repeat unit spans residues 116–143 (RCKLRVLKWRDEQHDFCGIWPGSHEAED). The stretch at 198-222 (HLLCRKLVIETLTKDTVIEIFKIVN) is one LRR 2; degenerate repeat. One copy of the LRR 3; degenerate repeat lies at 223–248 (ADCIQELELYSLCLEDLAFLNPYLRQ). The stretch at 249 to 285 (MDNLLELTLDHVTDSLSMGDSEMCEEEMITLVSQLPT) is one LRR 4; degenerate repeat. 5 LRR repeats span residues 286–311 (FPCLQKLCVNDVYFIYGNLNEILRCL), 312–343 (KKPLVSFCISNCELSQSDLDCLPYCLNIFELK), 344–367 (CLYLIDIPLNHLCLDPLGFLLESV), 368–395 (RHTLECLELKSCDMGEPQFNALLPALSQ), and 396–420 (CSHLTDVSFWENELSLLFLKQLLQH).

This sequence belongs to the PRAME family. Expressed in ovary, specifically in oocytes. Detected in follicles with two layers of granulosa cells, and are present in early as well as large antral follicles.

This Mus musculus (Mouse) protein is Oogenesin-3.